We begin with the raw amino-acid sequence, 237 residues long: Proteasome subunit alpha type-5 (237 aa).

Belongs to the peptidase T1A family. In terms of assembly, the 26S proteasome consists of a 20S proteasome core and two 19S regulatory subunits. The 20S proteasome core is composed of 28 subunits that are arranged in four stacked rings, resulting in a barrel-shaped structure. The two end rings are each formed by seven alpha subunits, and the two central rings are each formed by seven beta subunits. The catalytic chamber with the active sites is on the inside of the barrel.

Its subcellular location is the cytoplasm. It localises to the nucleus. Its function is as follows. The proteasome is a multicatalytic proteinase complex which is characterized by its ability to cleave peptides with Arg, Phe, Tyr, Leu, and Glu adjacent to the leaving group at neutral or slightly basic pH. The proteasome has an ATP-dependent proteolytic activity. This Oryza sativa subsp. japonica (Rice) protein is Proteasome subunit alpha type-5 (PAE1).